An 82-amino-acid polypeptide reads, in one-letter code: Small ribosomal subunit protein bS16 (82 aa).

This sequence belongs to the bacterial ribosomal protein bS16 family.

The chain is Small ribosomal subunit protein bS16 from Acidobacterium capsulatum (strain ATCC 51196 / DSM 11244 / BCRC 80197 / JCM 7670 / NBRC 15755 / NCIMB 13165 / 161).